Consider the following 193-residue polypeptide: Ion-translocating oxidoreductase complex subunit A (193 aa).

6 consecutive transmembrane segments (helical) span residues 5–25 (LLLF…FLGL), 47–67 (FVMT…LVPL), 72–92 (LRTM…EMVV), 102–122 (LLGI…VALL), 134–154 (ALYG…FAAI), and 171–191 (AIAL…SGLV).

Belongs to the NqrDE/RnfAE family. As to quaternary structure, the complex is composed of six subunits: RnfA, RnfB, RnfC, RnfD, RnfE and RnfG.

Its subcellular location is the cell inner membrane. Part of a membrane-bound complex that couples electron transfer with translocation of ions across the membrane. The sequence is that of Ion-translocating oxidoreductase complex subunit A from Cronobacter sakazakii (strain ATCC BAA-894) (Enterobacter sakazakii).